We begin with the raw amino-acid sequence, 134 residues long: Fluoride-specific ion channel FluC (134 aa).

The next 4 helical transmembrane spans lie at 7–27 (LAVAIGGSLGAMSRYLVTIMA), 38–58 (GTLLVNTLGSFLAGFFLIVLV), 69–89 (LFLFTGFLGAFTTFSSFAAES), and 110–130 (VGSLSMVFIGTLVAKYVLLGH). Na(+) contacts are provided by Gly77 and Thr80.

The protein belongs to the fluoride channel Fluc/FEX (TC 1.A.43) family.

Its subcellular location is the cell inner membrane. The catalysed reaction is fluoride(in) = fluoride(out). Na(+) is not transported, but it plays an essential structural role and its presence is essential for fluoride channel function. Functionally, fluoride-specific ion channel. Important for reducing fluoride concentration in the cell, thus reducing its toxicity. This is Fluoride-specific ion channel FluC from Legionella pneumophila subsp. pneumophila (strain Philadelphia 1 / ATCC 33152 / DSM 7513).